A 756-amino-acid polypeptide reads, in one-letter code: Rab11 family-interacting protein 3 (756 aa).

The span at 1–24 shows a compositional bias: pro residues; that stretch reads MASAPPASPPGSEPPGPDPEPGGP. The segment at 1–204 is disordered; the sequence is MASAPPASPP…SEPVGSQEDG (204 aa). Residues 2-435 form an important for binding to DYNC1LI1 region; sequence ASAPPASPPG…RLSSKKVARY (434 aa). Residues 27-39 are compositionally biased toward low complexity; sequence PGAAQLAPGPAEL. Serine 52 bears the Phosphoserine mark. A compositionally biased stretch (low complexity) spans 53–68; the sequence is PGLDEPAPGAAADGGA. Residues 84–94 are compositionally biased toward pro residues; sequence DPGPSAPPPRS. Serine 102 bears the Phosphoserine; by CDK1 mark. 2 EF-hand domains span residues 202–237 and 234–269; these read EDGPRLRAVFDALDGDGDGFVRIEDFIQFATVYGAE and YGAEQVKDLTKYLDPSGLGVISFEDFYQGITAIRNG. Positions 215, 217, 219, 226, 247, 249, and 258 each coordinate Ca(2+). Phosphoserine is present on residues serine 281, serine 348, serine 488, serine 538, serine 647, and serine 648. Residues 484-588 are ARF-binding domain (ABD); the sequence is GEQHSRLRQE…LLDEIESLTL (105 aa). Residues 485 to 694 adopt a coiled-coil conformation; that stretch reads EQHSRLRQEN…NGQIITLSIQ (210 aa). Positions 645 to 664 are disordered; sequence RSSSMGLQEYHSRARESELE. Positions 654-664 are enriched in basic and acidic residues; the sequence is YHSRARESELE. Residues 694 to 756 form the FIP-RBD domain; sequence QGAKSLFSTA…ETNPSILEVK (63 aa).

In terms of assembly, homodimer. Interacts with RAB11A; the interaction is direct and is required for the recruitment to endosomes. Interacts with RAB11B. Forms a ternary complex with RAB11A and dynein intermediate chain DYNC1LI1; RAB11FIP3 links RAB11A to dynein and the interaction regulates endocytic trafficking. Interacts with dynein intermediate chain and dynactin (DCTN1); the interaction activates dynein processivity. Interacts with ARF6 and EXOC7; the interaction serves for recruitment and tethering of recycling endosomes-derived vesicles to the cleavage furrow/midbody. Interacts with RACGAP1/MgcRacGAP; the interaction occurs at late telophase and is required for recruitment and tethering of recycling endosomes-derived vesicles to the cleavage furrow/midbody. Forms a complex with RAB11A and Rabin8/RAB3IP, probably a heterohexamer with two of each protein subunit, where RAB3IP and RAB11FIP3 simultaneously bind to RAB11A; the complex promotes preciliary trafficking. Forms a complex containing RAB11A, ASAP1, RAB3IP, RAP11FIP3 and ARF4; the complex promotes preciliary trafficking; the complex binds to RHO in photoreceptor cells and promotes RHO ciliary transport. Interacts with RAB11FIP4. Interacts with RAB25. Post-translationally, phosphorylated at Ser-102 by CDK1 during metaphase, and dephosphorylated as cells enter telophase.

Its subcellular location is the endosome membrane. It localises to the recycling endosome membrane. The protein resides in the cytoplasm. It is found in the cytoskeleton. The protein localises to the microtubule organizing center. Its subcellular location is the centrosome. It localises to the cleavage furrow. The protein resides in the midbody. It is found in the golgi apparatus membrane. The protein localises to the golgi apparatus. Its subcellular location is the trans-Golgi network membrane. Downstream effector molecule for Rab11 GTPase which is involved in endocytic trafficking, cytokinesis and intracellular ciliogenesis by participating in membrane delivery. Recruited by Rab11 to endosomes where it links Rab11 to dynein motor complex. The functional Rab11-RAB11FIP3-dynein complex regulates the movement of peripheral sorting endosomes (SE) along microtubule tracks toward the microtubule organizing center/centrosome, generating the endocytic recycling compartment (ERC) during interphase of cell cycle. Facilitates the interaction between dynein and dynactin and activates dynein processivity. Binding with ASAP1 is needed to regulate the pericentrosomal localization of recycling endosomes. The Rab11-RAB11FIP3 complex is also implicated in the transport during telophase of vesicles derived from recycling endosomes to the cleavage furrow via centrosome-anchored microtubules, where the vesicles function to deliver membrane during late cytokinesis and abscission. The recruitment of Rab11-RAB11FIP3-containing endosomes to the cleavage furrow and tethering to the midbody is co-mediated by RAB11FIP3 interaction with ARF6-exocyst and RACGAP1-MKLP1 tethering complexes. Also involved in the Rab11-Rabin8-Rab8 ciliogenesis cascade by facilitating the orderly assembly of a ciliary targeting complex containing Rab11, ASAP1, Rabin8/RAB3IP, RAB11FIP3 and ARF4, which directs preciliary vesicle trafficking to mother centriole and ciliogenesis initiation. Also promotes the activity of Rab11 and ASAP1 in the ARF4-dependent Golgi-to-cilia transport of the sensory receptor rhodopsin. Competes with WDR44 for binding to Rab11, which controls intracellular ciliogenesis pathway. May play a role in breast cancer cell motility by regulating actin cytoskeleton. The sequence is that of Rab11 family-interacting protein 3 from Homo sapiens (Human).